The following is an 892-amino-acid chain: Dystroglycan 1 (892 aa).

The signal sequence occupies residues 1–27 (MRMSAGLSLLLPLWGRTFLLLLSVAMA). Topologically, residues 28-750 (QSHWPSEAGR…SSEDDVYLHT (723 aa)) are extracellular. A required for laminin recognition region spans residues 30-405 (HWPSEAGRDW…GQIRPTMTIP (376 aa)). Residues 46 to 68 (SMHSVLSDLHEAVPTVVGIPDGI) are O-glycosylated at one site. Residue N138 is glycosylated (N-linked (GlcNAc...) asparagine). Cysteines 179 and 261 form a disulfide. Positions 313–482 (ATPTPVTAIG…PPTRIRTTTS (170 aa)) are mucin-like domain. O-linked (Man6P...) threonine glycosylation is found at T314, T316, and T376. Positions 378–497 (TLGPIQPTRV…GEPNQRPELK (120 aa)) are disordered. The segment covering 410-444 (PTAVATPPTTTTKKPRVSTPKPATPSTDSSTTTTR) has biased composition (low complexity). An O-glycosylated at seven sites with GalNAc region spans residues 460–482 (TTKAPITRLETASPPTRIRTTTS). A Peptidase S72 domain is found at 600–709 (RAPARFKAKF…SSIAVTGSGS (110 aa)). N-linked (GlcNAc...) asparagine glycans are attached at residues N638, N646, and N658. C666 and C710 form a disulfide bridge. The disordered stretch occupies residues 721–742 (PRRVPSEVPSTDVPDRDPEKSS). Residues 733-742 (VPDRDPEKSS) show a composition bias toward basic and acidic residues. The helical transmembrane segment at 751–771 (VIPAVVVAAILLIAGIIAMIC) threads the bilayer. Residues 772-892 (YRKKRKGKLT…YRSPPPYVPP (121 aa)) lie on the Cytoplasmic side of the membrane. The short motif at 773 to 779 (RKKRKGK) is the Nuclear localization signal element. T787 carries the post-translational modification Phosphothreonine. Residues 816–892 (LQEEKAPLPP…YRSPPPYVPP (77 aa)) form a required for interaction with CAV3 region. The segment at 820 to 892 (KAPLPPPEYP…YRSPPPYVPP (73 aa)) is disordered. A compositionally biased stretch (polar residues) spans 829 to 843 (PNQSVPETTPLNQDT). A compositionally biased stretch (pro residues) spans 856-867 (NAPPYQPPPPFT). The interval 877–892 (PKNMTPYRSPPPYVPP) is required for binding DMD and UTRN. The PPXY motif motif lies at 886-889 (PPPY). The residue at position 889 (Y889) is a Phosphotyrosine; by SRC.

In terms of assembly, monomer. Heterodimer of alpha- and beta-dystroglycan subunits which are the central components of the dystrophin-glycoprotein complex. This complex then can form a dystrophin-associated glycoprotein complex (DGC) which is composed of three subcomplexes: a cytoplasmic complex comprised of DMD (or UTRN), DTNA and a number of syntrophins, such as SNTB1, SNTB2, SNTG1 and SNTG2, the transmembrane dystroglycan complex, and the sarcoglycan-sarcospan complex. Interacts (via the N-terminal of alphaDAG1) with LARGE1; the interaction enhances laminin binding. Interacts with SGCD. Interacts with AGR2 and AGR3. Interacts (betaDAG1) with DMD; the interaction is inhibited by phosphorylation on the PPXY motif. Interacts (betaDAG1, via its PPXY motif) with UTRN (via its WWW and ZZ domains); the interaction is inhibited by phosphorylation on the PPXY motif. Interacts (betaDAG1, via its phosphorylated PPXY motif) with the SH2 domain-containing proteins, FYN, CSK, NCK and SHC. Interacts (betaDAG1) with CAV3 (via a central WW-like domain); the interaction disrupts the binding of DMD. BetaDAG1 directly interacts with ANK3, but not with ANK2; this interaction does not interfere with DMD-binding and is required for retention at costameres. Identified in a dystroglycan complex that contains at least PRX, DRP2, UTRN, DMD and DAG1. Interacts with POMGNT1. BetaDAG1 interacts with CD93. In terms of processing, O-glycosylated. POMGNT1 catalyzes the initial addition of N-acetylglucosamine, giving rise to the GlcNAc(beta1-2)Man(alpha1-)O-Ser/Thr moiety and thus providing the necessary basis for the addition of further carbohydrate moieties. Heavily O-glycosylated comprising of up to two thirds of its mass and the carbohydrate composition differs depending on tissue type. Mucin-type O-glycosylation is important for ligand binding activity. O-mannosylation is found in high abundance in both brain and muscle where the most abundant glycan is Sia-alpha-2-3-Gal-beta-1-4-Glc-NAc-beta-1-2-Man. In muscle, glycosylation on Thr-314, Thr-316 and Thr-376 by a phosphorylated O-mannosyl glycan with the structure 2-(N-acetylamido)-2-deoxygalactosyl-beta-1,3-2-(N-acetylamido)-2-deoxyglucosyl-beta-1,4-6-phosphomannose is mediated by like-acetylglucosaminyltransferase (LARGE1) protein amd is required for laminin binding. O-glycosylated in the N-terminal region with a core 1 or possibly core 8 glycan. The brain form displays a unique glycosylation pattern which is absent in other tissues; this form shows enhanced binding to laminin LAMA5 compared to the skeletal muscle form. Post-translationally, N-glycosylated. Autolytic cleavage produces the alpha and beta subunits. In cutaneous cells, as well as in certain pathological conditions, shedding of beta-dystroglycan can occur releasing a peptide of about 30 kDa. In terms of processing, SRC-mediated phosphorylation of the PPXY motif of the beta subunit recruits SH2 domain-containing proteins, but inhibits binding to WWW domain-containing proteins, DMD and UTRN. This phosphorylation also inhibits nuclear entry.

Its subcellular location is the secreted. The protein localises to the extracellular space. It localises to the cell membrane. The protein resides in the cytoplasm. It is found in the cytoskeleton. Its subcellular location is the nucleus. The protein localises to the nucleoplasm. It localises to the sarcolemma. The protein resides in the postsynaptic cell membrane. The dystroglycan complex is involved in a number of processes including laminin and basement membrane assembly, sarcolemmal stability, cell survival, peripheral nerve myelination, nodal structure, cell migration, and epithelial polarization. In terms of biological role, extracellular peripheral glycoprotein that acts as a receptor for extracellular matrix proteins containing laminin-G domains. Receptor for laminin-2 (LAMA2) and agrin in peripheral nerve Schwann cells. Also acts as a receptor for laminin LAMA5. Its function is as follows. Transmembrane protein that plays important roles in connecting the extracellular matrix to the cytoskeleton. Acts as a cell adhesion receptor in both muscle and non-muscle tissues. Receptor for both DMD and UTRN and, through these interactions, scaffolds axin to the cytoskeleton. Also functions in cell adhesion-mediated signaling and implicated in cell polarity. The sequence is that of Dystroglycan 1 from Canis lupus familiaris (Dog).